Consider the following 312-residue polypeptide: Olfactory receptor 1D5 (312 aa).

The Extracellular segment spans residues 1–25; the sequence is MDGDNQSENSQFLLLGISESPEQQR. Asn-5 carries N-linked (GlcNAc...) asparagine glycosylation. Residues 26 to 49 form a helical membrane-spanning segment; that stretch reads ILFWMFLSMYLVTVLGNVLIILAI. Over 50–57 the chain is Cytoplasmic; it reads SSDSHLHT. The helical transmembrane segment at 58-79 threads the bilayer; that stretch reads PMYFFLANLSFTDLFFVTNTIP. Residues 80 to 100 lie on the Extracellular side of the membrane; sequence KMLVNFQSQNKAISYAGCLTQ. A disulfide bond links Cys-97 and Cys-189. The chain crosses the membrane as a helical span at residues 101–120; that stretch reads LYFLVSLVTLDNLILAVMAY. The Cytoplasmic segment spans residues 121–140; it reads DRYVATCCPLHYVTAMSPGL. A helical membrane pass occupies residues 141–158; the sequence is CVLLLSLCWGLSVLYGLL. The Extracellular portion of the chain corresponds to 159–196; that stretch reads LTFLLTRVTFCGPREIHYLFCDMYILLWLACSNTHIIH. The helical transmembrane segment at 197-220 threads the bilayer; that stretch reads TALIATGCFIFLTPLGFMTTSYVR. Over 221–237 the chain is Cytoplasmic; it reads IVRTILQMPSASKKYKT. The chain crosses the membrane as a helical span at residues 238-260; that stretch reads FSTCASHLGVVSLFYGTLAMVYL. Residues 261 to 271 are Extracellular-facing; that stretch reads QPLHTYSMKDS. The chain crosses the membrane as a helical span at residues 272 to 291; the sequence is VATVMYAVLTPMMNPFIYRL. Over 292 to 312 the chain is Cytoplasmic; the sequence is RNKDMHGAPGRVLWRPFQRPK.

Belongs to the G-protein coupled receptor 1 family.

The protein localises to the cell membrane. In terms of biological role, odorant receptor. This Homo sapiens (Human) protein is Olfactory receptor 1D5 (OR1D5).